The primary structure comprises 224 residues: C-&gt;U-editing enzyme APOBEC-2 (224 aa).

The disordered stretch occupies residues 1–24 (MAQKEEAAVATEAASQNGEDLENL). Zn(2+) is bound by residues E60 and H98. In terms of domain architecture, CMP/dCMP-type deaminase spans 64–169 (GRNKTFLCYV…PEIQAALKKL (106 aa)). Catalysis depends on E100, which acts as the Proton donor. Zn(2+)-binding residues include C128 and C131.

Belongs to the cytidine and deoxycytidylate deaminase family. As to quaternary structure, homotetramer. Zn(2+) is required as a cofactor. As to expression, expressed exclusively in heart and skeletal muscle.

The enzyme catalyses cytidine(6666) in apoB mRNA + H2O + H(+) = uridine(6666) in apoB mRNA + NH4(+). Its function is as follows. Probable C to U editing enzyme whose physiological substrate is not yet known. Does not display detectable apoB mRNA editing. Has a low intrinsic cytidine deaminase activity. May play a role in the epigenetic regulation of gene expression through the process of active DNA demethylation. The protein is C-&gt;U-editing enzyme APOBEC-2 (APOBEC2) of Homo sapiens (Human).